The following is a 396-amino-acid chain: Maltose/maltodextrin-binding periplasmic protein (396 aa).

Positions 1-26 (MKIKTGARILALSALTTMMFSASALA) are cleaved as a signal peptide.

The protein belongs to the bacterial solute-binding protein 1 family. The complex is composed of two ATP-binding proteins (MalK), two transmembrane proteins (MalG and MalF) and a solute-binding protein (MalE).

The protein resides in the periplasm. Part of the ABC transporter complex MalEFGK involved in maltose/maltodextrin import. Binds maltose and higher maltodextrins. The polypeptide is Maltose/maltodextrin-binding periplasmic protein (malE) (Escherichia coli O157:H7).